The chain runs to 300 residues: Glutamyl-Q tRNA(Asp) synthetase (300 aa).

L-glutamate is bound by residues 8–12 and Glu44; that span reads RFAPS. Residues 11-21 carry the 'HIGH' region motif; the sequence is PSPTGALHAGS. Zn(2+) contacts are provided by Cys100, Cys102, Tyr126, and Cys130. L-glutamate contacts are provided by Tyr190 and Arg208. The 'KMSKS' region signature appears at 246 to 250; the sequence is KLSKQ. Lys249 is a binding site for ATP.

The protein belongs to the class-I aminoacyl-tRNA synthetase family. GluQ subfamily. It depends on Zn(2+) as a cofactor.

Its function is as follows. Catalyzes the tRNA-independent activation of glutamate in presence of ATP and the subsequent transfer of glutamate onto a tRNA(Asp). Glutamate is transferred on the 2-amino-5-(4,5-dihydroxy-2-cyclopenten-1-yl) moiety of the queuosine in the wobble position of the QUC anticodon. This chain is Glutamyl-Q tRNA(Asp) synthetase, found in Leptothrix cholodnii (strain ATCC 51168 / LMG 8142 / SP-6) (Leptothrix discophora (strain SP-6)).